The sequence spans 318 residues: MAIEKKFVNDGYVKASMDEYFAEQLSRAGYGGMELNRTPMGTQIVIYSEKPGMVIGKAGKVIRKLTRDVANKYSLENPQIDAQEVKRPELNAQMMASRLAASIERGWYFRKAGHNTLRAVMNAGALGCEVVISGKLTGARSRVEKFVDGYIKHSGNPVEEVVDEGFAVAVKKLGTLGCKVRIIQPGVVLPDSYKVRESVEVEEPAEKPAEKPAEKPAEKAAAPKKEAAKARAPAPAPEAPAPAPEAPAPAPVEEAEVAEPEEAEEVQAETSEEIEGAELVYVEGSDEVRRQVNGVWQHKHGSYDYWHPMARVHKEAKE.

The KH type-2 domain maps to Met-17–Lys-86. A compositionally biased stretch (basic and acidic residues) spans Ser-198–Lys-229. The segment at Ser-198–Glu-275 is disordered. Over residues Ala-234 to Ala-250 the composition is skewed to pro residues. Over residues Glu-253–Glu-275 the composition is skewed to acidic residues.

Belongs to the universal ribosomal protein uS3 family. Part of the 30S ribosomal subunit.

Binds the lower part of the 30S subunit head. This Methanosarcina acetivorans (strain ATCC 35395 / DSM 2834 / JCM 12185 / C2A) protein is Small ribosomal subunit protein uS3.